The chain runs to 115 residues: Transmembrane protein 218 (115 aa).

3 consecutive transmembrane segments (helical) span residues 5-25 (VLGV…VLLL), 38-58 (FSIV…LLFP), and 81-101 (YVLL…LLTH).

It belongs to the TMEM218 family. As to quaternary structure, interacts with TMEM67.

It localises to the membrane. Its subcellular location is the cell projection. It is found in the cilium. Its function is as follows. May be involved in ciliary biogenesis or function. This is Transmembrane protein 218 (Tmem218) from Mus musculus (Mouse).